We begin with the raw amino-acid sequence, 172 residues long: Shikimate kinase (172 aa).

14 to 19 contacts ATP; that stretch reads GAGKTT. Mg(2+) is bound at residue T18. Substrate contacts are provided by D36, R60, and G82. Residue R119 coordinates ATP. Position 137 (R137) interacts with substrate.

Belongs to the shikimate kinase family. As to quaternary structure, monomer. Requires Mg(2+) as cofactor.

It is found in the cytoplasm. It catalyses the reaction shikimate + ATP = 3-phosphoshikimate + ADP + H(+). It functions in the pathway metabolic intermediate biosynthesis; chorismate biosynthesis; chorismate from D-erythrose 4-phosphate and phosphoenolpyruvate: step 5/7. Functionally, catalyzes the specific phosphorylation of the 3-hydroxyl group of shikimic acid using ATP as a cosubstrate. This Thermobifida fusca (strain YX) protein is Shikimate kinase.